Consider the following 158-residue polypeptide: Large ribosomal subunit protein uL16 (158 aa).

This sequence belongs to the universal ribosomal protein uL16 family. Part of the 50S ribosomal subunit.

Its function is as follows. Binds 23S rRNA and is also seen to make contacts with the A and possibly P site tRNAs. The chain is Large ribosomal subunit protein uL16 from Synechococcus sp. (strain CC9902).